The following is a 190-amino-acid chain: MFIAVEGIDGAGKTTLAKSLSSLLEKEGFRVFLTREPTDDIRNYEGDDVELFIKFTLDRYKHQKEIRKKLNEGFVVISDRYIRSSYAYEMKGAAAALGSEEKAKEWMDCVSNIITIRPDINILVQVDVQVGLDRISKRNGTITHFEQRERLNEALKIYNSFDWDIKVDGTDPLDKITNEVYLYLKNKIGL.

ATP is bound at residue 7–14; sequence GIDGAGKT.

Belongs to the thymidylate kinase family.

The catalysed reaction is dTMP + ATP = dTDP + ADP. The polypeptide is Probable thymidylate kinase (Thermoplasma volcanium (strain ATCC 51530 / DSM 4299 / JCM 9571 / NBRC 15438 / GSS1)).